Reading from the N-terminus, the 384-residue chain is Probable protein phosphatase 2C 42 (384 aa).

The PPM-type phosphatase domain occupies 58-358 (DFSMAVIQAN…DDITVIVVFL (301 aa)). Mn(2+)-binding residues include D89, G90, D290, and D349.

The protein belongs to the PP2C family. Mg(2+) serves as cofactor. Requires Mn(2+) as cofactor.

The enzyme catalyses O-phospho-L-seryl-[protein] + H2O = L-seryl-[protein] + phosphate. The catalysed reaction is O-phospho-L-threonyl-[protein] + H2O = L-threonyl-[protein] + phosphate. In terms of biological role, dephosphorylates and represses plasma membrane H(+)-ATPases (PM H(+)-ATPases, e.g. AHA1 and AHA2), thus influencing negatively plant growth and fitness. Promotes the apical hook maintenance of etiolated seedlings. The protein is Probable protein phosphatase 2C 42 of Arabidopsis thaliana (Mouse-ear cress).